Here is a 460-residue protein sequence, read N- to C-terminus: Light-independent protochlorophyllide reductase subunit N (460 aa).

[4Fe-4S] cluster is bound by residues Cys20, Cys45, and Cys105.

It belongs to the BchN/ChlN family. In terms of assembly, protochlorophyllide reductase is composed of three subunits; ChlL, ChlN and ChlB. Forms a heterotetramer of two ChlB and two ChlN subunits. [4Fe-4S] cluster serves as cofactor.

The protein resides in the plastid. The protein localises to the chloroplast. The catalysed reaction is chlorophyllide a + oxidized 2[4Fe-4S]-[ferredoxin] + 2 ADP + 2 phosphate = protochlorophyllide a + reduced 2[4Fe-4S]-[ferredoxin] + 2 ATP + 2 H2O. It participates in porphyrin-containing compound metabolism; chlorophyll biosynthesis (light-independent). In terms of biological role, component of the dark-operative protochlorophyllide reductase (DPOR) that uses Mg-ATP and reduced ferredoxin to reduce ring D of protochlorophyllide (Pchlide) to form chlorophyllide a (Chlide). This reaction is light-independent. The NB-protein (ChlN-ChlB) is the catalytic component of the complex. This chain is Light-independent protochlorophyllide reductase subunit N, found in Adiantum capillus-veneris (Maidenhair fern).